Here is a 539-residue protein sequence, read N- to C-terminus: Dihydrolipoyllysine-residue acetyltransferase component 2 of pyruvate dehydrogenase complex, mitochondrial (539 aa).

The transit peptide at 1–102 (MASRIINHSK…SSQMRSVRGF (102 aa)) directs the protein to the mitochondrion. The interval 102–122 (FSSSSDLPPHQEIGMPSLSPT) is disordered. In terms of domain architecture, Lipoyl-binding spans 111 to 187 (HQEIGMPSLS…QVGEVIAITV (77 aa)). Lys152 bears the N6-lipoyllysine mark. The interval 196 to 244 (FKDYTPSSDTGPAAPEAKPAPSLPKEEKVEKPASAPEAKISKPSSAPSE) is disordered. The region spanning 248–285 (FASPLARKLAEDNNVPLSSIKGTGPEGRIVKADVEDFL) is the Peripheral subunit-binding (PSBD) domain. Residues His512 and Asp516 contribute to the active site.

This sequence belongs to the 2-oxoacid dehydrogenase family. The cofactor is (R)-lipoate.

Its subcellular location is the mitochondrion matrix. The enzyme catalyses N(6)-[(R)-dihydrolipoyl]-L-lysyl-[protein] + acetyl-CoA = N(6)-[(R)-S(8)-acetyldihydrolipoyl]-L-lysyl-[protein] + CoA. Its function is as follows. The pyruvate dehydrogenase complex catalyzes the overall conversion of pyruvate to acetyl-CoA and CO(2). It contains multiple copies of three enzymatic components: pyruvate dehydrogenase (E1), dihydrolipoamide acetyltransferase (E2) and lipoamide dehydrogenase (E3). The polypeptide is Dihydrolipoyllysine-residue acetyltransferase component 2 of pyruvate dehydrogenase complex, mitochondrial (Arabidopsis thaliana (Mouse-ear cress)).